The sequence spans 213 residues: von Hippel-Lindau disease tumor suppressor (213 aa).

The segment at 1 to 65 (MPRRAENWDE…AGRPRPVLRS (65 aa)) is disordered. The segment covering 8-54 (WDEAEVGAEEAGVEEYGPEEDGGEESGAEESGPEESGPEELGAEEEM) has biased composition (acidic residues). A run of 8 repeats spans residues 14 to 18 (GAEEA), 19 to 23 (GVEEY), 24 to 28 (GPEED), 29 to 33 (GGEES), 34 to 38 (GAEES), 39 to 43 (GPEES), 44 to 48 (GPEEL), and 49 to 53 (GAEEE). Residues 14 to 53 (GAEEAGVEEYGPEEDGGEESGAEESGPEESGPEELGAEEE) are 8 X 5 AA tandem repeats of G-[PAVG]-E-E-[DAYSLE]. The interval 100 to 155 (TLPPGTGRRIHSYRGHLWLFRDAGTHDGLLVNQTELFVPSLNVDGQPIFANITLPV) is involved in binding to CCT complex. The interval 157–166 (TLKERCLQVV) is interaction with Elongin BC complex.

Belongs to the VHL family. Component of the VCB (VHL-Elongin BC-CUL2) complex; this complex acts as a ubiquitin-ligase E3 and directs proteasome-dependent degradation of targeted proteins. Interacts with CUL2; this interaction is dependent on the integrity of the trimeric VCB complex. Interacts (via the beta domain) with HIF1A (via the NTAD domain); this interaction mediates degradation of HIF1A in normoxia and, in hypoxia, prevents ubiquitination and degradation of HIF1A by mediating hypoxia-induced translocation to the nucleus, a process which requires a hypoxia-dependent regulatory signal. Interacts with ADRB2; the interaction, in normoxia, is dependent on hydroxylation of ADRB2 and the subsequent VCB-mediated ubiquitination and degradation of ADRB2. Under hypoxia, hydroxylation, interaction with VHL, ubiquitination and subsequent degradation of ADRB2 are dramatically decreased. Interacts with RNF139, USP33 and JADE1. Found in a complex composed of LIMD1, VHL, EGLN1/PHD2, ELOB and CUL2. Isoform 1 and isoform 3 interact with LIMD1 (via LIM zinc-binding 2), AJUBA (via LIM domains) and WTIP (via LIM domains). Interacts with EPAS1. Interacts with CARD9. Interacts with DCUN1D1 independently of CUL2; this interaction engages DCUN1D1 in the VCB complex and triggers CUL2 neddylation and consequently cullin ring ligase (CRL) substrates polyubiquitylation. Interacts with ALAS1 (hydroxylated form). Interacts with IGFBP1. In terms of tissue distribution, expressed in the adult and fetal brain and kidney.

Its subcellular location is the cytoplasm. The protein resides in the cell membrane. It localises to the endoplasmic reticulum. It is found in the nucleus. Its pathway is protein modification; protein ubiquitination. In terms of biological role, involved in the ubiquitination and subsequent proteasomal degradation via the von Hippel-Lindau ubiquitination complex. Seems to act as a target recruitment subunit in the E3 ubiquitin ligase complex and recruits hydroxylated hypoxia-inducible factor (HIF) under normoxic conditions. Involved in transcriptional repression through interaction with HIF1A, HIF1AN and histone deacetylases. Ubiquitinates, in an oxygen-responsive manner, ADRB2. Acts as a negative regulator of mTORC1 by promoting ubiquitination and degradation of RPTOR. The polypeptide is von Hippel-Lindau disease tumor suppressor (VHL) (Homo sapiens (Human)).